The chain runs to 139 residues: Large ribosomal subunit protein uL16 (139 aa).

The span at Met-1–Met-17 shows a compositional bias: basic residues. The disordered stretch occupies residues Met-1–Gly-24.

Belongs to the universal ribosomal protein uL16 family. Part of the 50S ribosomal subunit.

Its function is as follows. Binds 23S rRNA and is also seen to make contacts with the A and possibly P site tRNAs. This is Large ribosomal subunit protein uL16 from Pelodictyon phaeoclathratiforme (strain DSM 5477 / BU-1).